The primary structure comprises 505 residues: Sucrose porin (505 aa).

The first 22 residues, 1 to 22, serve as a signal peptide directing secretion; sequence MYRKSTLAMLIALLTSAASAHA. Residues 44–87 are disordered; the sequence is ENRAQTAENRAGAAEKKVQQLTAQQQKNQNSTQEVAQRTARLEK. The span at 62 to 72 shows a compositional bias: low complexity; it reads QQLTAQQQKNQ.

It belongs to the porin LamB (TC 1.B.3) family. Homotrimer.

It is found in the cell outer membrane. Its function is as follows. Porin for sucrose uptake. The chain is Sucrose porin (scrY) from Salmonella typhimurium.